Consider the following 205-residue polypeptide: uncharacterized protein (205 aa).

This is an uncharacterized protein from Methanococcus vannielii (strain ATCC 35089 / DSM 1224 / JCM 13029 / OCM 148 / SB).